Here is a 154-residue protein sequence, read N- to C-terminus: Endoribonuclease YbeY (154 aa).

Zn(2+) is bound by residues H114, H118, and H124.

It belongs to the endoribonuclease YbeY family. Zn(2+) serves as cofactor.

Its subcellular location is the cytoplasm. Functionally, single strand-specific metallo-endoribonuclease involved in late-stage 70S ribosome quality control and in maturation of the 3' terminus of the 16S rRNA. The protein is Endoribonuclease YbeY of Anaplasma phagocytophilum (strain HZ).